The chain runs to 346 residues: Probable dual-specificity RNA methyltransferase RlmN (346 aa).

Glu-76 functions as the Proton acceptor in the catalytic mechanism. Residues 97–329 enclose the Radical SAM core domain; sequence SYDRATICVS…TFIRKPRGRD (233 aa). Cys-104 and Cys-334 are oxidised to a cystine. Cys-111, Cys-115, and Cys-118 together coordinate [4Fe-4S] cluster. S-adenosyl-L-methionine contacts are provided by residues 162-163, Ser-192, 215-217, and Asn-291; these read GE and SLN. Cys-334 (S-methylcysteine intermediate) is an active-site residue.

This sequence belongs to the radical SAM superfamily. RlmN family. Requires [4Fe-4S] cluster as cofactor.

The protein resides in the cytoplasm. The enzyme catalyses adenosine(2503) in 23S rRNA + 2 reduced [2Fe-2S]-[ferredoxin] + 2 S-adenosyl-L-methionine = 2-methyladenosine(2503) in 23S rRNA + 5'-deoxyadenosine + L-methionine + 2 oxidized [2Fe-2S]-[ferredoxin] + S-adenosyl-L-homocysteine. The catalysed reaction is adenosine(37) in tRNA + 2 reduced [2Fe-2S]-[ferredoxin] + 2 S-adenosyl-L-methionine = 2-methyladenosine(37) in tRNA + 5'-deoxyadenosine + L-methionine + 2 oxidized [2Fe-2S]-[ferredoxin] + S-adenosyl-L-homocysteine. In terms of biological role, specifically methylates position 2 of adenine 2503 in 23S rRNA and position 2 of adenine 37 in tRNAs. This Koribacter versatilis (strain Ellin345) protein is Probable dual-specificity RNA methyltransferase RlmN.